The primary structure comprises 156 residues: Probable succinate transporter subunit YjjB (156 aa).

4 helical membrane-spanning segments follow: residues 7–27, 54–74, 86–106, and 128–148; these read WALL…AMVF, FGMN…IIGI, VFTV…TAMI, and FLKA…PGIW.

This sequence belongs to the ThrE exporter (TC 2.A.79) family. As to quaternary structure, the transporter is composed of YjjB and YjjP.

The protein localises to the cell inner membrane. Its function is as follows. Involved in succinate export with YjjP. Both proteins are required for export. The chain is Probable succinate transporter subunit YjjB from Pectobacterium carotovorum subsp. carotovorum (strain PC1).